Here is a 134-residue protein sequence, read N- to C-terminus: Large ribosomal subunit protein uL22 (134 aa).

The protein belongs to the universal ribosomal protein uL22 family. As to quaternary structure, part of the 50S ribosomal subunit.

Its function is as follows. This protein binds specifically to 23S rRNA; its binding is stimulated by other ribosomal proteins, e.g. L4, L17, and L20. It is important during the early stages of 50S assembly. It makes multiple contacts with different domains of the 23S rRNA in the assembled 50S subunit and ribosome. In terms of biological role, the globular domain of the protein is located near the polypeptide exit tunnel on the outside of the subunit, while an extended beta-hairpin is found that lines the wall of the exit tunnel in the center of the 70S ribosome. This Rhodococcus jostii (strain RHA1) protein is Large ribosomal subunit protein uL22.